The primary structure comprises 317 residues: Annexin D2 (317 aa).

Ala-2 bears the N-acetylalanine mark. Annexin repeat units follow at residues 11-82 (PLPE…LWTL), 83-154 (DPPE…PLVS), 166-238 (MLAR…AVIT), and 242-313 (YPEK…ALLG). Positions 24, 26, 28, and 68 each coordinate Ca(2+). Ser-95 bears the Phosphoserine mark. Phosphothreonine is present on residues Thr-100 and Thr-112. A Phosphotyrosine modification is found at Tyr-129. Residues Ile-255 and Gly-259 each contribute to the Ca(2+) site. Phosphotyrosine is present on Tyr-284. Ser-289 carries the phosphoserine modification. 3 residues coordinate Ca(2+): Asp-299, Thr-300, and Glu-305.

The protein belongs to the annexin (TC 1.A.31.1) family. Expressed mainly in roots and flowers. Low in stems and bearly detectable in leaves.

The protein localises to the cytoplasm. It is found in the cytosol. Its subcellular location is the membrane. In terms of biological role, may mediate regulated, targeted secretion of Golgi-derived vesicles during seedling development. This chain is Annexin D2 (ANN2), found in Arabidopsis thaliana (Mouse-ear cress).